Consider the following 131-residue polypeptide: Modulator protein MzrA (131 aa).

The Cytoplasmic segment spans residues 1–14; the sequence is MSIRWLFPKLTPRK. A helical membrane pass occupies residues 15–31; the sequence is VARILILLALPIIALTQ. Residues 32–131 lie on the Periplasmic side of the membrane; the sequence is SQSLRHSQDD…KLTQKQSKLG (100 aa).

Belongs to the MzrA family. In terms of assembly, interacts with EnvZ.

Its subcellular location is the cell inner membrane. In terms of biological role, modulates the activity of the EnvZ/OmpR two-component regulatory system, probably by directly modulating EnvZ enzymatic activity and increasing stability of phosphorylated OmpR. The chain is Modulator protein MzrA from Pectobacterium carotovorum subsp. carotovorum (strain PC1).